Reading from the N-terminus, the 307-residue chain is N-acetylglucosaminyl-diphospho-decaprenol L-rhamnosyltransferase (307 aa).

It belongs to the glycosyltransferase 2 family. It depends on Mn(2+) as a cofactor. The cofactor is Mg(2+).

It catalyses the reaction N-acetyl-alpha-D-glucosaminyl-1-diphospho-trans,octa-cis-decaprenol + dTDP-beta-L-rhamnose = alpha-L-rhamnosyl-(1-&gt;3)-N-acetyl-alpha-D-glucosaminyl-diphospho-trans,octa-cis-decaprenol + dTDP + H(+). Its function is as follows. Involved in the biosynthesis of the mycolylarabinogalactan-peptidoglycan (mAGP) complex, an essential component of the mycobacterial cell wall. Catalyzes the transfer of the rhamnosyl moiety from dTDP-rhamnosyl (dTDP-Rha) onto the decaprenyl-pyrophosphoryl-GlcNAc (C50-PP-GlcNAc), yielding rhamnosyl-decaprenyl-pyrophosphoryl-GlcNAc (Rha-C50-PP-GlcNAc). This chain is N-acetylglucosaminyl-diphospho-decaprenol L-rhamnosyltransferase (wbbL), found in Mycobacterium tuberculosis (strain CDC 1551 / Oshkosh).